We begin with the raw amino-acid sequence, 175 residues long: Regenerating islet-derived protein 3-beta (175 aa).

The signal sequence occupies residues 1 to 26 (MLHRLAFPVMSWMLLSCLMLLSQVQG). Positions 27-37 (EDSPKKIPSAR) are excised as a propeptide. Intrachain disulfides connect cysteine 40–cysteine 51, cysteine 68–cysteine 171, and cysteine 146–cysteine 163. The C-type lectin domain maps to 47 to 172 (YGSYCYALFQ…CEVKLPYVCK (126 aa)). A Zn(2+)-binding site is contributed by histidine 107. The EPN motif lies at 114–116 (EPN). Glutamate 121 is a binding site for Zn(2+).

As to quaternary structure, forms a hexameric membrane-permeabilizing oligomeric pore on membrane phospholipids. The hexamer is formed by three dimers related by helical symmetry. Forms filaments, filamentation traps pore complexes and limits damage to host cells. Interacts with EXTL3. In terms of processing, proteolytic processing by trypsin removes an inhibitory N-terminal propeptide and is essential for peptidoglycan binding and antibacterial activity. Constitutively expressed in intestine.

Its subcellular location is the secreted. Lipopolysaccharide inhibits pore-forming activity, explaining why is bactericidal for Gram-positive but not Gram-negative bacteria. In terms of biological role, bactericidal C-type lectin which acts against several intestinal Gram-positive bacteria and Gram-negative bacteria. Lacks antibacterial activity against S.typhimurium. May play a role in protection against infection with S.enteritidis by inhibiting its translocation from the gut lumen into intestinal tissues and further extraintestinal tissues. Its function is as follows. Acts as a hormone in response to different stimuli. Secreted by different cell types to activate its receptor EXTL3 and induce cell specific signaling pathways. In pancreas, is able stimulate cell proliferation. The chain is Regenerating islet-derived protein 3-beta from Rattus norvegicus (Rat).